A 203-amino-acid polypeptide reads, in one-letter code: Alpha-amylase/subtilisin inhibitor (203 aa).

The segment covering 1–12 (MGSRRAGSSSSP) has biased composition (polar residues). The N-terminal stretch at 1–22 (MGSRRAGSSSSPLFWPAPPSRA) is a signal peptide. Residues 1-34 (MGSRRAGSSSSPLFWPAPPSRAADPPPVHDTDGH) are disordered. Pro residues predominate over residues 15–26 (WPAPPSRAADPP). 2 disulfide bridges follow: Cys65–Cys112 and Cys166–Cys170.

The protein belongs to the protease inhibitor I3 (leguminous Kunitz-type inhibitor) family.

Functionally, this protein inhibits independently subtilisin and alpha-amylase. The sequence is that of Alpha-amylase/subtilisin inhibitor from Hordeum vulgare (Barley).